Consider the following 411-residue polypeptide: Protein Rv3035 (411 aa).

The sequence is that of Protein Rv3035 from Mycobacterium tuberculosis (strain ATCC 25618 / H37Rv).